Here is a 361-residue protein sequence, read N- to C-terminus: Septin-2 (361 aa).

Position 17 is a phosphotyrosine (Y17). Residues K34–R306 enclose the Septin-type G domain. Residues G44–S51 are G1 motif. GTP is bound by residues G44–S51, T78, G104, and K183–E191. The segment at D101–G104 is G3 motif. The interval A182–D185 is G4 motif. The residue at position 190 (K190) is an N6-acetyllysine. Phosphotyrosine is present on Y211. S218 carries the post-translational modification Phosphoserine. Residues G241 and R256 each contribute to the GTP site. The interval W260 to H270 is important for dimerization.

The protein belongs to the TRAFAC class TrmE-Era-EngA-EngB-Septin-like GTPase superfamily. Septin GTPase family. Septins polymerize into heterooligomeric protein complexes that form filaments, and associate with cellular membranes, actin filaments and microtubules. GTPase activity is required for filament formation. Filaments are assembled from asymmetrical heterotrimers, composed of SEPTIN2, SEPTIN6 and SEPTIN7 that associate head-to-head to form a hexameric unit. Interaction between SEPTIN2 and SEPTIN7 seems indirect. Interacts with SEPTIN5. Interaction with SEPTIN4 not detected. Interacts with SEPTIN9. Component of a septin core octameric complex consisting of SEPTIN12, SEPTIN7, SEPTIN6 and SEPTIN2 or SEPTIN4 in the order 12-7-6-2-2-6-7-12 or 12-7-6-4-4-6-7-12 and located in the sperm annulus. Interacts with MAP4. Interacts with DZIP1L.

The protein resides in the cytoplasm. Its subcellular location is the cytoskeleton. It localises to the spindle. It is found in the chromosome. The protein localises to the centromere. The protein resides in the kinetochore. Its subcellular location is the cleavage furrow. It localises to the midbody. It is found in the cell cortex. The protein localises to the cell projection. The protein resides in the cilium membrane. Its subcellular location is the cilium. It localises to the flagellum. Its function is as follows. Filament-forming cytoskeletal GTPase. Forms a filamentous structure with SEPTIN12, SEPTIN6, SEPTIN2 and probably SEPTIN4 at the sperm annulus which is required for the structural integrity and motility of the sperm tail during postmeiotic differentiation. Required for normal organization of the actin cytoskeleton. Plays a role in the biogenesis of polarized columnar-shaped epithelium by maintaining polyglutamylated microtubules, thus facilitating efficient vesicle transport, and by impeding MAP4 binding to tubulin. Required for the progression through mitosis. Forms a scaffold at the midplane of the mitotic splindle required to maintain CENPE localization at kinetochores and consequently chromosome congression. During anaphase, may be required for chromosome segregation and spindle elongation. Plays a role in ciliogenesis and collective cell movements. In cilia, required for the integrity of the diffusion barrier at the base of the primary cilium that prevents diffusion of transmembrane proteins between the cilia and plasma membranes: probably acts by regulating the assembly of the tectonic-like complex (also named B9 complex) by localizing TMEM231 protein. In Bos taurus (Bovine), this protein is Septin-2.